Consider the following 133-residue polypeptide: Small ribosomal subunit protein uS11 (133 aa).

The protein belongs to the universal ribosomal protein uS11 family. As to quaternary structure, part of the 30S ribosomal subunit. Interacts with proteins S7 and S18. Binds to IF-3.

Located on the platform of the 30S subunit, it bridges several disparate RNA helices of the 16S rRNA. Forms part of the Shine-Dalgarno cleft in the 70S ribosome. This chain is Small ribosomal subunit protein uS11, found in Bordetella petrii (strain ATCC BAA-461 / DSM 12804 / CCUG 43448).